We begin with the raw amino-acid sequence, 84 residues long: Beta-mammal toxin Cn2 (84 aa).

Residues 1–16 form the signal peptide; the sequence is LLIITACLALIGTVWA. The LCN-type CS-alpha/beta domain maps to 17-82; the sequence is KEGYLVDKNT…VWPLPNKRCS (66 aa). Cystine bridges form between cysteine 28/cysteine 81, cysteine 32/cysteine 57, cysteine 41/cysteine 62, and cysteine 45/cysteine 64. Serine 82 is modified (serine amide).

This sequence belongs to the long (4 C-C) scorpion toxin superfamily. Sodium channel inhibitor family. Beta subfamily. In terms of tissue distribution, expressed by the venom gland.

It localises to the secreted. Functionally, mammal beta-toxins bind voltage-independently at site-4 of sodium channels (Nav) and shift the activation voltage to more negative potentials. This toxin is active against mammals. This is Beta-mammal toxin Cn2 from Centruroides noxius (Mexican scorpion).